Consider the following 507-residue polypeptide: Arylsulfatase A (507 aa).

An N-terminal signal peptide occupies residues 1 to 18; it reads MGAPRSLLLALAAGLAVA. 3 residues coordinate Ca(2+): Asp29, Asp30, and Cys69. Cys69 functions as the Nucleophile in the catalytic mechanism. Position 69 is a 3-oxoalanine (Cys) (Cys69). A substrate-binding site is contributed by Lys123. Residue His125 is part of the active site. Ser150 provides a ligand contact to substrate. 2 cysteine pairs are disulfide-bonded: Cys156–Cys172 and Cys161–Cys168. An N-linked (GlcNAc...) asparagine glycan is attached at Asn158. N-linked (GlcNAc...) asparagine glycosylation is present at Asn184. Position 229 (His229) interacts with substrate. Ca(2+) contacts are provided by Asp281 and Asn282. Disulfide bonds link Cys300–Cys414, Cys488–Cys500, Cys489–Cys502, and Cys493–Cys499. A substrate-binding site is contributed by Lys302. A glycan (N-linked (GlcNAc...) asparagine) is linked at Asn350.

Belongs to the sulfatase family. In terms of assembly, homodimer at neutral pH and homooctamer at acidic pH. Exists both as a single chain of 58 kDa (component A) or as a chain of 50 kDa (component B) linked by disulfide bond(s) to a 7 kDa chain (component C). Interacts with SUMF1. It depends on Ca(2+) as a cofactor. In terms of processing, the conversion to 3-oxoalanine (also known as C-formylglycine, FGly), of a serine or cysteine residue in prokaryotes and of a cysteine residue in eukaryotes, is critical for catalytic activity. This post-translational modification is severely defective in multiple sulfatase deficiency (MSD).

The protein localises to the endoplasmic reticulum. It localises to the lysosome. It catalyses the reaction an N-acyl-1-beta-D-(3-O-sulfo)-galactosyl-sphing-4-enine + H2O = a beta-D-galactosyl-(1&lt;-&gt;1')-N-acylsphing-4-enine + sulfate + H(+). Its activity is regulated as follows. Inhibited by phosphate. The phosphate forms a covalent bond with the active site 3-oxoalanine. Hydrolyzes cerebroside sulfate. The protein is Arylsulfatase A (ARSA) of Homo sapiens (Human).